Consider the following 259-residue polypeptide: Phosphatidylglycerol--prolipoprotein diacylglyceryl transferase (259 aa).

4 helical membrane-spanning segments follow: residues 9–29, 55–75, 92–112, and 117–137; these read IIFS…VIGI, FITY…VLLY, EGGM…YLFC, and INFL…LFLG. Arg-138 contributes to the a 1,2-diacyl-sn-glycero-3-phospho-(1'-sn-glycerol) binding site. Helical transmembrane passes span 172 to 192, 201 to 221, and 228 to 248; these read QLYE…YTTF, GLNS…IEIF, and IGFI…MLLL.

This sequence belongs to the Lgt family.

It localises to the cell inner membrane. The enzyme catalyses L-cysteinyl-[prolipoprotein] + a 1,2-diacyl-sn-glycero-3-phospho-(1'-sn-glycerol) = an S-1,2-diacyl-sn-glyceryl-L-cysteinyl-[prolipoprotein] + sn-glycerol 1-phosphate + H(+). The protein operates within protein modification; lipoprotein biosynthesis (diacylglyceryl transfer). In terms of biological role, catalyzes the transfer of the diacylglyceryl group from phosphatidylglycerol to the sulfhydryl group of the N-terminal cysteine of a prolipoprotein, the first step in the formation of mature lipoproteins. This is Phosphatidylglycerol--prolipoprotein diacylglyceryl transferase from Rickettsia africae (strain ESF-5).